Consider the following 111-residue polypeptide: MINNPISNNIFSQNNCLLKTIFTNSKINILSIKDVYGNCWYMLSDISSTFLIRQRKIKKIITKDNLDNFKHLCINLTKNQKKYYQTKYYIKNKTLFVNNKGIFTLIPFSKN.

This is an uncharacterized protein from Acanthamoeba polyphaga mimivirus (APMV).